The sequence spans 46 residues: Large ribosomal subunit protein bL34c (46 aa).

It belongs to the bacterial ribosomal protein bL34 family.

The protein localises to the plastid. Its subcellular location is the chloroplast. This chain is Large ribosomal subunit protein bL34c, found in Pyropia yezoensis (Susabi-nori).